The primary structure comprises 486 residues: Serralysin (486 aa).

Residue His187 coordinates Zn(2+). Glu188 is a catalytic residue. The Zn(2+) site is built by His191 and His197. The Ca(2+) site is built by Arg266, Asp269, Asp298, Gly300, Gly301, Asp303, Thr340, and Glu342. Hemolysin-type calcium-binding repeat units lie at residues 345–362 (IGGS…ANTL) and 363–380 (KGGA…ADNL).

Belongs to the peptidase M10B family. It depends on Zn(2+) as a cofactor. Requires Ca(2+) as cofactor.

It localises to the secreted. The catalysed reaction is Preferential cleavage of bonds with hydrophobic residues in P1'.. The sequence is that of Serralysin (prtA1) from Photorhabdus luminescens (Xenorhabdus luminescens).